We begin with the raw amino-acid sequence, 678 residues long: uncharacterized protein (678 aa).

The disordered stretch occupies residues 1–26 (MGVHFDDNANTTWEATDPGVSSDCDG). A run of 9 helical transmembrane segments spans residues 119–139 (LLLL…LIYP), 245–265 (SFPC…GGCT), 317–337 (AAVV…YDSI), 340–360 (YWIN…PPLL), 371–391 (ELFS…YVVW), 405–425 (IAKV…NVTF), 443–463 (GALT…VIQA), 475–495 (YFKI…LPGL), and 519–539 (AYLF…RWDF).

Its subcellular location is the vacuole membrane. This is an uncharacterized protein from Saccharomyces cerevisiae (strain ATCC 204508 / S288c) (Baker's yeast).